Consider the following 578-residue polypeptide: Type I restriction enzyme MjaVIII methylase subunit (578 aa).

Residues 250–255, 280–282, E303, and 332–333 each bind S-adenosyl-L-methionine; these read EVYTPI, SGS, and DS.

The protein belongs to the N(4)/N(6)-methyltransferase family. In terms of assembly, the type I restriction/modification system is composed of three polypeptides R, M and S.

The enzyme catalyses a 2'-deoxyadenosine in DNA + S-adenosyl-L-methionine = an N(6)-methyl-2'-deoxyadenosine in DNA + S-adenosyl-L-homocysteine + H(+). Functionally, the subtype gamma methyltransferase (M) subunit of a type I restriction enzyme. The M and S subunits together form a methyltransferase (MTase) that methylates A-2 on the top and A-3 on the bottom strand of the sequence 5'-GAYN(5)GTAA-3'. In the presence of the R subunit the complex can also act as an endonuclease, binding to the same target sequence but cutting the DNA some distance from this site. Whether the DNA is cut or modified depends on the methylation state of the target sequence. When the target site is unmodified, the DNA is cut. When the target site is hemimethylated, the complex acts as a maintenance MTase modifying the DNA so that both strands become methylated. After locating a non-methylated recognition site, the enzyme complex serves as a molecular motor that translocates DNA in an ATP-dependent manner until a collision occurs that triggers cleavage. The polypeptide is Type I restriction enzyme MjaVIII methylase subunit (Methanocaldococcus jannaschii (strain ATCC 43067 / DSM 2661 / JAL-1 / JCM 10045 / NBRC 100440) (Methanococcus jannaschii)).